Here is a 234-residue protein sequence, read N- to C-terminus: Sugar fermentation stimulation protein homolog (234 aa).

This sequence belongs to the SfsA family.

The protein is Sugar fermentation stimulation protein homolog of Enterobacter sp. (strain 638).